A 119-amino-acid chain; its full sequence is Ribonuclease P protein component (119 aa).

The protein belongs to the RnpA family. Consists of a catalytic RNA component (M1 or rnpB) and a protein subunit.

The catalysed reaction is Endonucleolytic cleavage of RNA, removing 5'-extranucleotides from tRNA precursor.. Its function is as follows. RNaseP catalyzes the removal of the 5'-leader sequence from pre-tRNA to produce the mature 5'-terminus. It can also cleave other RNA substrates such as 4.5S RNA. The protein component plays an auxiliary but essential role in vivo by binding to the 5'-leader sequence and broadening the substrate specificity of the ribozyme. The chain is Ribonuclease P protein component from Borreliella burgdorferi (strain ATCC 35210 / DSM 4680 / CIP 102532 / B31) (Borrelia burgdorferi).